Here is a 261-residue protein sequence, read N- to C-terminus: Putative [LysW]-aminoadipate/[LysW]-glutamate kinase (261 aa).

Substrate contacts are provided by residues Gly35–Gly36, Arg62, and Asn162.

This sequence belongs to the acetylglutamate kinase family. LysZ subfamily.

It localises to the cytoplasm. The enzyme catalyses [amino-group carrier protein]-C-terminal-N-(1,4-dicarboxybutan-1-yl)-L-glutamine + ATP = [amino-group carrier protein]-C-terminal-N-(1-carboxy-5-phosphooxy-5-oxopentan-1-yl)-L-glutamine + ADP. The catalysed reaction is [amino-group carrier protein]-C-terminal-gamma-(L-glutamyl)-L-glutamate + ATP = [amino-group carrier protein]-C-terminal-gamma-(5-phospho-L-glutamyl)-L-glutamate + ADP. It participates in amino-acid biosynthesis; L-lysine biosynthesis via AAA pathway; L-lysine from L-alpha-aminoadipate (Thermus route): step 2/5. The protein operates within amino-acid biosynthesis; L-arginine biosynthesis. Its function is as follows. Involved in both the arginine and lysine biosynthetic pathways. Phosphorylates the LysW-bound precursors glutamate (for arginine biosynthesis), respectively alpha-aminoadipate (for lysine biosynthesis). This chain is Putative [LysW]-aminoadipate/[LysW]-glutamate kinase, found in Pyrobaculum aerophilum (strain ATCC 51768 / DSM 7523 / JCM 9630 / CIP 104966 / NBRC 100827 / IM2).